Reading from the N-terminus, the 186-residue chain is Translation initiation factor IF-3 (186 aa).

The protein belongs to the IF-3 family. As to quaternary structure, monomer.

It is found in the cytoplasm. Its function is as follows. IF-3 binds to the 30S ribosomal subunit and shifts the equilibrium between 70S ribosomes and their 50S and 30S subunits in favor of the free subunits, thus enhancing the availability of 30S subunits on which protein synthesis initiation begins. In Chlamydia muridarum (strain MoPn / Nigg), this protein is Translation initiation factor IF-3.